The chain runs to 345 residues: Tetraacyldisaccharide 4'-kinase (345 aa).

ATP is bound at residue 51 to 58 (HVGGAGKT).

The protein belongs to the LpxK family.

It catalyses the reaction a lipid A disaccharide + ATP = a lipid IVA + ADP + H(+). It functions in the pathway glycolipid biosynthesis; lipid IV(A) biosynthesis; lipid IV(A) from (3R)-3-hydroxytetradecanoyl-[acyl-carrier-protein] and UDP-N-acetyl-alpha-D-glucosamine: step 6/6. Functionally, transfers the gamma-phosphate of ATP to the 4'-position of a tetraacyldisaccharide 1-phosphate intermediate (termed DS-1-P) to form tetraacyldisaccharide 1,4'-bis-phosphate (lipid IVA). This Bradyrhizobium sp. (strain BTAi1 / ATCC BAA-1182) protein is Tetraacyldisaccharide 4'-kinase.